Here is a 328-residue protein sequence, read N- to C-terminus: Endochitinase (328 aa).

The first 26 residues, 1–26 (MRRHKEVNFVAYLLFSLLVLVSAALA), serve as a signal peptide directing secretion. The 42-residue stretch at 27–68 (QNCGSQGGGKACASGQCCSKFGWCGNTNDYCGSGNCQSQCPG) folds into the Chitin-binding type-1 domain. Cystine bridges form between Cys-29/Cys-44, Cys-38/Cys-50, Cys-43/Cys-57, Cys-62/Cys-66, Cys-100/Cys-162, Cys-174/Cys-182, and Cys-281/Cys-313. Residue Glu-144 is the Proton donor of the active site. Residues 322–328 (ALLVDTL) constitute a propeptide, removed in mature form.

This sequence belongs to the glycosyl hydrolase 19 family. Chitinase class I subfamily.

Its subcellular location is the vacuole. It carries out the reaction Random endo-hydrolysis of N-acetyl-beta-D-glucosaminide (1-&gt;4)-beta-linkages in chitin and chitodextrins.. Functionally, defense against chitin-containing fungal pathogens. The protein is Endochitinase of Solanum tuberosum (Potato).